We begin with the raw amino-acid sequence, 354 residues long: Fructose-1,6-bisphosphatase class 1 (354 aa).

Positions 112, 134, 136, and 137 each coordinate Mg(2+). Substrate is bound by residues 137-140 (DGSS), Asn229, Tyr257, and Lys287. Glu293 is a Mg(2+) binding site.

The protein belongs to the FBPase class 1 family. Homotetramer. The cofactor is Mg(2+).

Its subcellular location is the cytoplasm. The enzyme catalyses beta-D-fructose 1,6-bisphosphate + H2O = beta-D-fructose 6-phosphate + phosphate. Its pathway is carbohydrate biosynthesis; Calvin cycle. The chain is Fructose-1,6-bisphosphatase class 1 from Trichodesmium erythraeum (strain IMS101).